Here is a 718-residue protein sequence, read N- to C-terminus: DNA topoisomerase 1 (718 aa).

The 143-residue stretch at 9–151 (HEVIICEKPK…KFSTLTREEI (143 aa)) folds into the Toprim domain. Positions 15 and 113 each coordinate Mg(2+). A Topo IA-type catalytic domain is found at 162–571 (DYGQVDSGAA…EAITEVRSIL (410 aa)). Residues 202–207 (SAGRVQ) form an interaction with DNA region. Tyr320 functions as the O-(5'-phospho-DNA)-tyrosine intermediate in the catalytic mechanism. A compositionally biased stretch (basic and acidic residues) spans 361–371 (HEGKKEDDAHP). The tract at residues 361–380 (HEGKKEDDAHPAIHPTGLLP) is disordered. 2 consecutive C4-type zinc fingers follow at residues 598 to 626 (CPAC…YPDC) and 680 to 706 (CPEC…FPKC).

The protein belongs to the type IA topoisomerase family. Monomer. Mg(2+) is required as a cofactor.

The enzyme catalyses ATP-independent breakage of single-stranded DNA, followed by passage and rejoining.. In terms of biological role, releases the supercoiling and torsional tension of DNA, which is introduced during the DNA replication and transcription, by transiently cleaving and rejoining one strand of the DNA duplex. Introduces a single-strand break via transesterification at a target site in duplex DNA. The scissile phosphodiester is attacked by the catalytic tyrosine of the enzyme, resulting in the formation of a DNA-(5'-phosphotyrosyl)-enzyme intermediate and the expulsion of a 3'-OH DNA strand. The free DNA strand then undergoes passage around the unbroken strand, thus removing DNA supercoils. Finally, in the religation step, the DNA 3'-OH attacks the covalent intermediate to expel the active-site tyrosine and restore the DNA phosphodiester backbone. This Methanothermobacter thermautotrophicus (strain ATCC 29096 / DSM 1053 / JCM 10044 / NBRC 100330 / Delta H) (Methanobacterium thermoautotrophicum) protein is DNA topoisomerase 1.